A 208-amino-acid chain; its full sequence is Ribosomal RNA small subunit methyltransferase G (208 aa).

Residues Gly78, Phe83, 101–103, 129–130, and Arg142 each bind S-adenosyl-L-methionine; these read ERS and IE.

The protein belongs to the methyltransferase superfamily. RNA methyltransferase RsmG family.

The protein resides in the cytoplasm. Specifically methylates the N7 position of a guanine in 16S rRNA. The polypeptide is Ribosomal RNA small subunit methyltransferase G (Borreliella burgdorferi (strain ZS7) (Borrelia burgdorferi)).